The primary structure comprises 754 residues: MHINQLLQHANSDLPLLQANFGLERESLRINKTNHRLAQTPHPTALGSRQFHPYIQTDYSESQMELITPVAHSSKEVLRFLGAITDVAERSIDQNQYLWPLSMPPQITEDEIEIAQLEDDFEFSYRQYLDKKYGKILQSISGIHYNMELGADLMNELFELSGYQSFIDFKNDLYLKVAQNFLNYRWFLTYLYGASPLAEKGFLNEELSQTVRSIRNSHLGYVNTDDIKVPFDSLENYISSIEHYVKSGALSAEKEFYSAVRLRGSKHNRDYLTKGITYLEFRCFDLNPFNNRGITQETIDSVHLFILAMLWLDTPKKLNQALDKAQKLNDKIALSHPLEKLPKENSASLIIEAMEALIKHFKLPSYYDDLLIAIKKQVENPKLTLSGRLFEHIKHASLEHFGQKKGQDYHNYAWQNYYALKGYENMELSTQMLLFDTIQKGIHFEILDENDQFLKLWHNDHIEYVKNGNMTSKDNYVIPLAMANKVVTKKILRENGYPVPAGAEFDNKDEALRYYSQIKNKPIVVKPKTTNFGLGISIFETAASHNDYEKALDIAFIEDYSVLVEEFIPGTEYRFFILDGKCEAVLLRVAANVVGDGHSTVRQLVAQKNRDPLRGREHRSPLEIIDLGDIELLMLQQEGYTLEDILPKGKKVNLRGNSNISTGGDSIDVTETMDPSYKQLAANMATAMGAWVCGVDLIIPDTNLKASKGKPNCTCIELNFNPSMYMHTYCYQGPGQVITGKILAKLFPEISTKI.

The tract at residues methionine 1–alanine 333 is glutamate--cysteine ligase. The ATP-grasp domain occupies lysine 489 to threonine 752. ATP is bound at residue serine 516–arginine 574. Residues aspartate 696, glutamate 717, and asparagine 719 each contribute to the Mg(2+) site. The Mn(2+) site is built by aspartate 696, glutamate 717, and asparagine 719.

The protein in the N-terminal section; belongs to the glutamate--cysteine ligase type 1 family. Type 2 subfamily. In terms of assembly, monomer. It depends on Mg(2+) as a cofactor. Requires Mn(2+) as cofactor.

It carries out the reaction L-cysteine + L-glutamate + ATP = gamma-L-glutamyl-L-cysteine + ADP + phosphate + H(+). The catalysed reaction is gamma-L-glutamyl-L-cysteine + glycine + ATP = glutathione + ADP + phosphate + H(+). It participates in sulfur metabolism; glutathione biosynthesis; glutathione from L-cysteine and L-glutamate: step 1/2. It functions in the pathway sulfur metabolism; glutathione biosynthesis; glutathione from L-cysteine and L-glutamate: step 2/2. Synthesizes glutathione from L-glutamate and L-cysteine via gamma-L-glutamyl-L-cysteine. This Streptococcus mutans serotype c (strain ATCC 700610 / UA159) protein is Glutathione biosynthesis bifunctional protein GshAB.